A 506-amino-acid polypeptide reads, in one-letter code: MKEYRVYLERARSRQQDFLYPLIFREYIYGLAYSHNFNRSIFVENGSYDNKYSLLNVKRLITRMSQQNHLIISANDSNKNPFLGYNKNFYSQIISEGFAIVVEIPFFLQLSSSLEEAEIIKSYKNVRSIHSIFPFLEDKFTYLNYVSDIRIPYPIHLEILVQILRYWVKDVPFFHLLRLFLYDFYNRNCFIPTKKSISTFSKSNPRLFLFLYNFYVCEYESIFLFLRNKSSHLRLKSFSVFFERIFFYAKREHLVEVFSKDFSYTLPFFKDPNIHYVRYQGKCILASKNVPFLMNKWKHYFIHLWQCFFDVWSQPRTININQLSEHSFQLLGYFSNVRLNRSVVRSQMLQNTFLIEIVSKKLDIIVPIIPLIRSLAKAKFCNVLGHPISKPVWADSSDFDIIERFLRICRNLSHYYNGSSKKKSLYRIKYILRLSCIKTLACKHKSTVRAFLKRSGSEELLEEFFTEEEEILSLIFPRDSFTLHRFHRNRIWYLDILFSNDLVNDE.

The protein belongs to the intron maturase 2 family. MatK subfamily.

It is found in the plastid. It localises to the chloroplast. In terms of biological role, usually encoded in the trnK tRNA gene intron. Probably assists in splicing its own and other chloroplast group II introns. The polypeptide is Maturase K (Trifolium hybridum (Alsike clover)).